The following is a 326-amino-acid chain: mRNA decay activator protein ZFP36 (326 aa).

Residues Met-1–Pro-15 form a necessary for nuclear export region. The tract at residues Met-1–Thr-100 is necessary and sufficient for the association with mRNA decay enzymes and mRNA decay activation. Necessary for localization of ARE-containing mRNAs to processing bodies (PBs) regions lie at residues Met-1–Ala-174 and Thr-100–Glu-326. The interval Leu-13 to Ser-66 is disordered. Positions Ser-28–Gly-49 are enriched in low complexity. Ser-60 is modified (phosphoserine; by MAPKAPK2). Position 66 is a phosphoserine (Ser-66). Residues Pro-71–Gly-75 form a P-P-P-P-G repeat. The tract at residues Pro-78 to Ser-102 is disordered. Phosphoserine occurs at positions 88 and 90. At Thr-92 the chain carries Phosphothreonine. Ser-93 carries the post-translational modification Phosphoserine. Residues Thr-95–Pro-168 are necessary for nuclear localization. The segment at Thr-97 to Ala-173 is necessary for RNA-binding. 2 C3H1-type zinc fingers span residues Arg-103 to Gly-131 and Lys-141 to Ser-169. The tract at residues Arg-103–Arg-194 is necessary for interaction with PABPN1. Ser-169 is modified (phosphoserine). The tract at residues Ala-174–Glu-326 is necessary for mRNA decay activation. 2 disordered regions span residues Pro-175–Pro-245 and Ser-273–Gly-292. Phosphoserine; by MAPKAPK2 is present on Ser-186. Residue Ser-197 is modified to Phosphoserine. The P-P-P-P-G repeat unit spans residues Pro-198 to Gly-202. Positions Ala-204 to Ser-216 are enriched in low complexity. A Phosphoserine modification is found at Ser-218. Residues Pro-219–Gly-223 form a P-P-P-P-G repeat. Position 228 is a phosphoserine; by MAPK1; in vitro (Ser-228). Phosphoserine occurs at positions 276, 296, and 323. The segment at Ala-312 to Glu-326 is interaction with CNOT1.

In terms of assembly, associates with cytoplasmic CCR4-NOT and PAN2-PAN3 deadenylase complexes to trigger ARE-containing mRNA deadenylation and decay processes. Part of a mRNA decay activation complex at least composed of poly(A)-specific exoribonucleases CNOT6, EXOSC2 and XRN1 and mRNA-decapping enzymes DCP1A and DCP2. Associates with the RNA exosome complex. Interacts (via phosphorylated form) with 14-3-3 proteins; these interactions promote exclusion of ZFP36 from cytoplasmic stress granules in response to arsenite treatment in a MAPKAPK2-dependent manner and does not prevent CCR4-NOT deadenylase complex recruitment or ZFP36-induced ARE-containing mRNA deadenylation and decay processes. Interacts with 14-3-3 proteins; these interactions occur in response to rapamycin in an Akt-dependent manner. Interacts with AGO2 and AGO4. Interacts (via C-terminus) with CNOT1; this interaction occurs in a RNA-independent manner and induces mRNA deadenylation. Interacts (via N-terminus) with CNOT6. Interacts with CNOT6L. Interacts (via C-terminus) with CNOT7; this interaction occurs in a RNA-independent manner, induces mRNA deadenylation and is inhibited in a phosphorylation MAPKAPK2-dependent manner. Interacts (via unphosphorylated form) with CNOT8; this interaction occurs in a RNA-independent manner and is inhibited in a phosphorylation MAPKAPK2-dependent manner. Interacts with DCP1A. Interacts (via N-terminus) with DCP2. Interacts with EDC3. Interacts (via N-terminus) with EXOSC2. Interacts with heat shock 70 kDa proteins. Interacts with KHSRP; this interaction increases upon cytokine-induced treatment. Interacts with MAP3K4; this interaction enhances the association with SH3KBP1/CIN85. Interacts with MAPKAPK2; this interaction occurs upon skeletal muscle satellite cell activation. Interacts with NCL. Interacts with NUP214; this interaction increases upon lipopolysaccharide (LPS) stimulation. Interacts with PABPC1; this interaction occurs in a RNA-dependent manner. Interacts (via hypophosphorylated form) with PABPN1 (via RRM domain and C-terminal arginine-rich region); this interaction occurs in the nucleus in a RNA-independent manner, decreases in presence of single-stranded poly(A) RNA-oligomer and in a p38 MAPK-dependent-manner and inhibits nuclear poly(A) tail synthesis. Interacts with PAN2. Interacts (via C3H1-type zinc finger domains) with PKM. Interacts (via C3H1-type zinc finger domains) with nuclear RNA poly(A) polymerase. Interacts with PPP2CA; this interaction occurs in LPS-stimulated cells and induces ZFP36 dephosphorylation, and hence may promote ARE-containing mRNAs decay. Interacts (via C-terminus) with PRR5L (via C-terminus); this interaction may accelerate ZFP36-mediated mRNA decay during stress. Interacts (via C-terminus) with SFN; this interaction occurs in a phosphorylation-dependent manner. Interacts (via extreme C-terminal region) with SH3KBP1/CIN85 (via SH3 domains); this interaction enhances MAP3K4-induced phosphorylation of ZFP36 at Ser-66 and Ser-93 and does not alter neither ZFP36 binding to ARE-containing transcripts nor TNF-alpha mRNA decay. Interacts with XRN1. Interacts (via C-terminus and Ser-186 phosphorylated form) with YWHAB; this interaction occurs in a p38/MAPKAPK2-dependent manner, increases cytoplasmic localization of ZFP36 and protects ZFP36 from Ser-186 dephosphorylation by serine/threonine phosphatase 2A, and hence may be crucial for stabilizing ARE-containing mRNAs. Interacts (via phosphorylated form) with YWHAE. Interacts (via C-terminus) with YWHAG; this interaction occurs in a phosphorylation-dependent manner. Interacts with YWHAH; this interaction occurs in a phosphorylation-dependent manner. Interacts with YWHAQ; this interaction occurs in a phosphorylation-dependent manner. Interacts with (via C-terminus) YWHAZ; this interaction occurs in a phosphorylation-dependent manner. Interacts (via P-P-P-P-G repeats) with GIGYF2; the interaction is direct. (Microbial infection) Interacts (via C-terminus) with HTLV-1 TAX (via C-terminus); this interaction inhibits HTLV-1 TAX to transactivate viral long terminal repeat (LTR) promoter. In terms of processing, phosphorylated. Phosphorylation at serine and/or threonine residues occurs in a p38 MAPK- and MAPKAPK2-dependent manner. Phosphorylated by MAPKAPK2 at Ser-60 and Ser-186; phosphorylation increases its stability and cytoplasmic localization, promotes binding to 14-3-3 adapter proteins and inhibits the recruitment of cytoplasmic CCR4-NOT and PAN2-PAN3 deadenylase complexes to the mRNA decay machinery, thereby inhibiting ZFP36-induced ARE-containing mRNA deadenylation and decay processes. Phosphorylation by MAPKAPK2 does not impair ARE-containing RNA-binding. Phosphorylated in a MAPKAPK2- and p38 MAPK-dependent manner upon skeletal muscle satellite cell activation; this phosphorylation inhibits ZFP36-mediated mRNA decay activity, and hence stabilizes MYOD1 mRNA. Phosphorylated by MAPK1 upon mitogen stimulation. Phosphorylated at Ser-66 and Ser-93; these phosphorylations increase in a SH3KBP1-dependent manner. Phosphorylated at serine and threonine residues in a pyruvate kinase PKM- and p38 MAPK-dependent manner. Phosphorylation at Ser-60 may participate in the PKM-mediated degradation of ZFP36 in a p38 MAPK-dependent manner. Dephosphorylated by serine/threonine phosphatase 2A at Ser-186. Ubiquitinated; pyruvate kinase (PKM)-dependent ubiquitination leads to proteasomal degradation through a p38 MAPK signaling pathway. Expressed in both basal and suprabasal epidermal layers. Expressed in epidermal keratinocytes. Expressed strongly in mature dendritic cells. Expressed in immature dendritic cells (at protein level).

It is found in the nucleus. It localises to the cytoplasm. The protein resides in the cytoplasmic granule. The protein localises to the P-body. Its function is as follows. Zinc-finger RNA-binding protein that destabilizes several cytoplasmic AU-rich element (ARE)-containing mRNA transcripts by promoting their poly(A) tail removal or deadenylation, and hence provide a mechanism for attenuating protein synthesis. Acts as an 3'-untranslated region (UTR) ARE mRNA-binding adapter protein to communicate signaling events to the mRNA decay machinery. Recruits deadenylase CNOT7 (and probably the CCR4-NOT complex) via association with CNOT1, and hence promotes ARE-mediated mRNA deadenylation. Functions also by recruiting components of the cytoplasmic RNA decay machinery to the bound ARE-containing mRNAs. Self regulates by destabilizing its own mRNA. Binds to 3'-UTR ARE of numerous mRNAs and of its own mRNA. Plays a role in anti-inflammatory responses; suppresses tumor necrosis factor (TNF)-alpha production by stimulating ARE-mediated TNF-alpha mRNA decay and several other inflammatory ARE-containing mRNAs in interferon (IFN)- and/or lipopolysaccharide (LPS)-induced macrophages. Also plays a role in the regulation of dendritic cell maturation at the post-transcriptional level, and hence operates as part of a negative feedback loop to limit the inflammatory response. Promotes ARE-mediated mRNA decay of hypoxia-inducible factor HIF1A mRNA during the response of endothelial cells to hypoxia. Positively regulates early adipogenesis of preadipocytes by promoting ARE-mediated mRNA decay of immediate early genes (IEGs). Negatively regulates hematopoietic/erythroid cell differentiation by promoting ARE-mediated mRNA decay of the transcription factor STAT5B mRNA. Plays a role in maintaining skeletal muscle satellite cell quiescence by promoting ARE-mediated mRNA decay of the myogenic determination factor MYOD1 mRNA. Associates also with and regulates the expression of non-ARE-containing target mRNAs at the post-transcriptional level, such as MHC class I mRNAs. Participates in association with argonaute RISC catalytic components in the ARE-mediated mRNA decay mechanism; assists microRNA (miRNA) targeting ARE-containing mRNAs. May also play a role in the regulation of cytoplasmic mRNA decapping; enhances decapping of ARE-containing RNAs, in vitro. Involved in the delivery of target ARE-mRNAs to processing bodies (PBs). In addition to its cytosolic mRNA-decay function, affects nuclear pre-mRNA processing. Negatively regulates nuclear poly(A)-binding protein PABPN1-stimulated polyadenylation activity on ARE-containing pre-mRNA during LPS-stimulated macrophages. Also involved in the regulation of stress granule (SG) and P-body (PB) formation and fusion. Plays a role in the regulation of keratinocyte proliferation, differentiation and apoptosis. Plays a role as a tumor suppressor by inhibiting cell proliferation in breast cancer cells. (Microbial infection) Negatively regulates HTLV-1 TAX-dependent transactivation of viral long terminal repeat (LTR) promoter. This is mRNA decay activator protein ZFP36 from Homo sapiens (Human).